The sequence spans 480 residues: Heparin cofactor 2 (480 aa).

The first 19 residues, methionine 1 to glycine 19, serve as a signal peptide directing secretion. N-linked (GlcNAc...) asparagine glycosylation is present at asparagine 32. A run of 2 repeats spans residues glycine 56–glutamate 66 and serine 70–aspartate 80. Residues glycine 56–aspartate 80 are 2 X 11 AA approximate repeats, Asp/Glu-rich (acidic) (hirudin-like). Sulfotyrosine is present on residues tyrosine 62 and tyrosine 75. Asparagine 169 carries an N-linked (GlcNAc...) asparagine glycan. Residues lysine 173 to arginine 193 form a glycosaminoglycan-binding site region. Asparagine 368 and asparagine 404 each carry an N-linked (GlcNAc...) asparagine glycan.

The protein belongs to the serpin family. N-glycosylated; different glycan composition appears to lead to two forms of this protein (56 and 60 kDa).

Thrombin inhibitor activated by the glycosaminoglycans, heparin or dermatan sulfate. In the presence of the latter, HC-II becomes the predominant thrombin inhibitor in place of antithrombin III (AT). This chain is Heparin cofactor 2 (SERPIND1), found in Oryctolagus cuniculus (Rabbit).